Consider the following 405-residue polypeptide: Exodeoxyribonuclease 7 large subunit (405 aa).

It belongs to the XseA family. In terms of assembly, heterooligomer composed of large and small subunits.

It localises to the cytoplasm. The catalysed reaction is Exonucleolytic cleavage in either 5'- to 3'- or 3'- to 5'-direction to yield nucleoside 5'-phosphates.. Bidirectionally degrades single-stranded DNA into large acid-insoluble oligonucleotides, which are then degraded further into small acid-soluble oligonucleotides. This Syntrophomonas wolfei subsp. wolfei (strain DSM 2245B / Goettingen) protein is Exodeoxyribonuclease 7 large subunit.